Consider the following 161-residue polypeptide: Small ribosomal subunit protein uS19 (161 aa).

The segment covering M1 to Q19 has biased composition (basic residues). A disordered region spans residues M1–R26.

This sequence belongs to the universal ribosomal protein uS19 family.

Its function is as follows. Protein S19 forms a complex with S13 that binds strongly to the 16S ribosomal RNA. The protein is Small ribosomal subunit protein uS19 of Methanococcus maripaludis (strain DSM 14266 / JCM 13030 / NBRC 101832 / S2 / LL).